The sequence spans 173 residues: Shikimate kinase 1 (173 aa).

Residue 14–19 (GAGKST) coordinates ATP. Residue serine 18 coordinates Mg(2+). Positions 36, 60, and 82 each coordinate substrate. Arginine 120 is an ATP binding site. Arginine 140 is a substrate binding site. Residue glutamine 157 coordinates ATP.

The protein belongs to the shikimate kinase family. As to quaternary structure, monomer. It depends on Mg(2+) as a cofactor.

The protein localises to the cytoplasm. It catalyses the reaction shikimate + ATP = 3-phosphoshikimate + ADP + H(+). It functions in the pathway metabolic intermediate biosynthesis; chorismate biosynthesis; chorismate from D-erythrose 4-phosphate and phosphoenolpyruvate: step 5/7. Its function is as follows. Catalyzes the specific phosphorylation of the 3-hydroxyl group of shikimic acid using ATP as a cosubstrate. The sequence is that of Shikimate kinase 1 from Salmonella typhimurium (strain LT2 / SGSC1412 / ATCC 700720).